A 329-amino-acid chain; its full sequence is MQGSVTEFLKPRLVDIEQISPTHAKVTLEPLERGFGYTLGNALRRILLSSMPGCAVTEVEIDGVLHEYSSKEGVQEDVIEVLLNLKGLAVSVEGKDEATLTLNKSGAGPVTAGDFTHDGDVEIVNPEHVICHLTGDYELVMRVKVERGRGYVPAASRQSADDDERPIGRLLVDASFSPVERIAYSVDAARVEQRTDLDKLVIEMETNGTLDPEEAIRRAATILAEQLDAFVELRDISEPEEKEEKPEFDPILLRPVDDLELTVRSANCLKAEAIQYIGDLVQRTEVELLKTPNLGKKSLTEIKDVLASRGLSLGMRLENWPPASLIDND.

The interval 1-234 is alpha N-terminal domain (alpha-NTD); sequence MQGSVTEFLK…EQLDAFVELR (234 aa). The alpha C-terminal domain (alpha-CTD) stretch occupies residues 248 to 329; the sequence is FDPILLRPVD…WPPASLIDND (82 aa).

This sequence belongs to the RNA polymerase alpha chain family. In terms of assembly, homodimer. The RNAP catalytic core consists of 2 alpha, 1 beta, 1 beta' and 1 omega subunit. When a sigma factor is associated with the core the holoenzyme is formed, which can initiate transcription.

The catalysed reaction is RNA(n) + a ribonucleoside 5'-triphosphate = RNA(n+1) + diphosphate. Its function is as follows. DNA-dependent RNA polymerase catalyzes the transcription of DNA into RNA using the four ribonucleoside triphosphates as substrates. This chain is DNA-directed RNA polymerase subunit alpha, found in Idiomarina loihiensis (strain ATCC BAA-735 / DSM 15497 / L2-TR).